Here is a 240-residue protein sequence, read N- to C-terminus: Ion-translocating oxidoreductase complex subunit E (240 aa).

Helical transmembrane passes span 41–61, 71–91, 95–115, 130–150, and 184–204; these read LGLG…VSLV, LPAF…LMQA, ELYQ…VILG, SFDG…LGGL, and GFLL…LIAL.

This sequence belongs to the NqrDE/RnfAE family. The complex is composed of six subunits: RnfA, RnfB, RnfC, RnfD, RnfE and RnfG.

It is found in the cell inner membrane. Part of a membrane-bound complex that couples electron transfer with translocation of ions across the membrane. In Pseudomonas aeruginosa (strain ATCC 15692 / DSM 22644 / CIP 104116 / JCM 14847 / LMG 12228 / 1C / PRS 101 / PAO1), this protein is Ion-translocating oxidoreductase complex subunit E.